The following is a 185-amino-acid chain: Elongation factor P (185 aa).

Belongs to the elongation factor P family.

It localises to the cytoplasm. Its pathway is protein biosynthesis; polypeptide chain elongation. Involved in peptide bond synthesis. Stimulates efficient translation and peptide-bond synthesis on native or reconstituted 70S ribosomes in vitro. Probably functions indirectly by altering the affinity of the ribosome for aminoacyl-tRNA, thus increasing their reactivity as acceptors for peptidyl transferase. The polypeptide is Elongation factor P (Cyanothece sp. (strain PCC 7425 / ATCC 29141)).